Here is a 1187-residue protein sequence, read N- to C-terminus: DNA-directed RNA polymerase subunit beta (1187 aa).

It belongs to the RNA polymerase beta chain family. In terms of assembly, the RNAP catalytic core consists of 2 alpha, 1 beta, 1 beta' and 1 omega subunit. When a sigma factor is associated with the core the holoenzyme is formed, which can initiate transcription.

The catalysed reaction is RNA(n) + a ribonucleoside 5'-triphosphate = RNA(n+1) + diphosphate. Functionally, DNA-dependent RNA polymerase catalyzes the transcription of DNA into RNA using the four ribonucleoside triphosphates as substrates. This Petrotoga mobilis (strain DSM 10674 / SJ95) protein is DNA-directed RNA polymerase subunit beta.